A 953-amino-acid chain; its full sequence is Coatomer subunit beta (953 aa).

Threonine 2 carries the N-acetylthreonine modification. HEAT repeat units follow at residues 96–131, 132–168, 240–276, 277–314, 316–353, and 396–433; these read HEMILVCDAYRKDLQHPNEFIRGSTLRFLCKLKEAE, LLEPLMPAIRACLEHRHSYVRRNAVLAIYTIYRNFEN, SERARFIRCIYNLLQSSSPAVKYEAAGTLVTLSSAPT, AIKAAAQCYIDLIIKESDNNVKLIVLDRLVELKEHPAH, RVLQDLVMDILRVLSTPDLEVRKKTLQLALDLVSSRNV, and DMAANVIPVLMEFLSDSNEAAAADVLEFVREAIQRFDN. Residue lysine 494 is modified to N6-acetyllysine.

In terms of assembly, oligomeric complex that consists of at least the alpha, beta, beta', gamma, delta, epsilon and zeta subunits. Interacts with SCYL1. Interacts with CAPN8. Interacts with COPG1. Interacts with ARF1 (myristoylated); this interaction is required for binding of COPB1 to Golgi membranes. Interacts (via trunk domain) with ARF1 (via switch I region); the interaction is direct. Interacts with KCNK2 (via N-terminus); this interaction increases the channel-mediated whole cell currents and promotes plasma membrane expression of KCNK2. Interacts with PRKCE. Interacts with STX17. Interacts with TMEM115. Interacts with TMEM41B. Proteolytically cleaved between Ser-528 and Ser-529 by CAPN8.

The protein localises to the cytoplasm. It is found in the golgi apparatus membrane. It localises to the cytoplasmic vesicle. Its subcellular location is the COPI-coated vesicle membrane. The protein resides in the cell membrane. The protein localises to the endoplasmic reticulum-Golgi intermediate compartment. It is found in the microsome membrane. Its function is as follows. The coatomer is a cytosolic protein complex that binds to dilysine motifs and reversibly associates with Golgi non-clathrin-coated vesicles, which further mediate biosynthetic protein transport from the ER, via the Golgi up to the trans Golgi network. Coatomer complex is required for budding from Golgi membranes, and is essential for the retrograde Golgi-to-ER transport of dilysine-tagged proteins. In mammals, the coatomer can only be recruited by membranes associated to ADP-ribosylation factors (ARFs), which are small GTP-binding proteins; the complex also influences the Golgi structural integrity, as well as the processing, activity, and endocytic recycling of LDL receptors. Involved in the Golgi disassembly and reassembly processes during cell cycle. Involved in autophagy by playing a role in early endosome function. Plays a role in organellar compartmentalization of secretory compartments including endoplasmic reticulum (ER)-Golgi intermediate compartment (ERGIC), Golgi, trans-Golgi network (TGN) and recycling endosomes, and in biosynthetic transport of CAV1. Plays a functional role in facilitating the transport of kappa-type opioid receptor mRNAs into axons and enhances translation of these proteins in the axonal compartment of dorsal root ganglion (DRG) cells. Required for limiting lipid storage in lipid droplets. Involved in lipid homeostasis by regulating the presence of perilipin family members PLIN2 and PLIN3 at the lipid droplet surface and promoting the association of adipocyte triglyceride lipase (PNPLA2) with the lipid droplet surface to mediate lipolysis. This chain is Coatomer subunit beta (Copb1), found in Rattus norvegicus (Rat).